The chain runs to 574 residues: MEFPIDDEELLDERNKLLQICNMDEQTMFYKWESWCLQRGNTPKLDLDTFKAFAKDMKFQMERQVKATLKQNPERKSIKQIPGMNIDSILGLPVKTTASGDSLMQESKPSTETFELNSSDAGRVLEVLNKELKIVTSKPSAPSKLVIVANFDLKAFNYRIMYQKLYDSSEVLDDRIELFSALTCRKYNISDEDLANPSELTQEPVVVVGRIVVESTNLGGRLNQNSILLESSRRLGAGVRVRLKVDDLPSYSIFPGQIVSVKGSNPSGNMFIAKEILPIPPLPFPSSSKQEHATFVANTNNQPISIYIASGPWSLRDDLSFSPLKSMISYVNKNPVDLVILCGPFLDINHILIRTGNITGTSATSLEELFKERVTPILSQLTCPCILIPHINDAASDHPAWPQDAFNRVALGLPSNFKCFPNPCMFSINDVVFGVSTNDILLHTSREELFRLPSHGNLFARLVSHVLHQRHFYPLFPGGSLEKCNPSNLDIAHLKLGEFLNTMPDILILPSDLRYFVKNVENVVSLNPGKATKGINLGTFAKLTIAPLELGDNGSSNHYSHRVWLRTKAEILKL.

It belongs to the DNA polymerase alpha subunit B family. As to quaternary structure, component of the alpha DNA polymerase complex (also known as the alpha DNA polymerase-primase complex) consisting of four subunits: the catalytic subunit pol1, the accessory subunit spb70/pol12, and the primase complex subunits spp1/pri1 and spp2/pri2 respectively. Interacts with orc1. Interacts with orc2; the interaction occurs on the chromatin, is stable thoughout the cell cycle and is independent from spb70 role in the alpha DNA polymerase complex. Post-translationally, phosphorylated in a cell cycle-dependent manner.

The protein localises to the nucleus. Its subcellular location is the chromosome. Accessory subunit of the DNA polymerase alpha complex (also known as the alpha DNA polymerase-primase complex) which plays an essential role in the initiation of DNA synthesis. During the S phase of the cell cycle, the DNA polymerase alpha complex (composed of a catalytic subunit pol1, an accessory subunit spb70/pol12 and two primase subunits, the catalytic subunit spp1/pri1 and the regulatory subunit spp2/pri2) is recruited to DNA at the replicative forks. The primase subunit of the polymerase alpha complex initiates DNA synthesis by oligomerising short RNA primers on both leading and lagging strands. This Schizosaccharomyces pombe (strain 972 / ATCC 24843) (Fission yeast) protein is DNA polymerase alpha subunit B.